Here is a 306-residue protein sequence, read N- to C-terminus: UDP-N-acetylenolpyruvoylglucosamine reductase (306 aa).

Positions 29–193 constitute an FAD-binding PCMH-type domain; that stretch reads RVGGPADWLF…IRASLRGTPD (165 aa). Arginine 173 is an active-site residue. The active-site Proton donor is serine 222. The active site involves glutamate 292.

Belongs to the MurB family. FAD is required as a cofactor.

The protein localises to the cytoplasm. It catalyses the reaction UDP-N-acetyl-alpha-D-muramate + NADP(+) = UDP-N-acetyl-3-O-(1-carboxyvinyl)-alpha-D-glucosamine + NADPH + H(+). Its pathway is cell wall biogenesis; peptidoglycan biosynthesis. In terms of biological role, cell wall formation. This Gluconobacter oxydans (strain 621H) (Gluconobacter suboxydans) protein is UDP-N-acetylenolpyruvoylglucosamine reductase.